Here is a 597-residue protein sequence, read N- to C-terminus: Lipoprotein LpqB (597 aa).

The N-terminal stretch at 1–28 (MTPGSRSAMRSRSVCGAIALAVLVTVSG) is a signal peptide. Cys-29 carries the N-palmitoyl cysteine lipid modification. The S-diacylglycerol cysteine moiety is linked to residue Cys-29. The segment covering 39-51 (QAIGTINRDSPGS) has biased composition (polar residues). The disordered stretch occupies residues 39–59 (QAIGTINRDSPGSSVAAPAPG).

The protein belongs to the LpqB lipoprotein family.

The protein localises to the cell membrane. The chain is Lipoprotein LpqB from Rhodococcus opacus (strain B4).